Consider the following 143-residue polypeptide: Fluoride-specific ion channel FluC (143 aa).

Transmembrane regions (helical) follow at residues 3 to 23 (AVVW…GSGL), 41 to 61 (WGTL…LIWL), 76 to 96 (IVGL…CLVF), and 103 to 123 (LMVG…VFLG). Positions 81 and 84 each coordinate Na(+).

Belongs to the fluoride channel Fluc/FEX (TC 1.A.43) family.

The protein resides in the cell inner membrane. The enzyme catalyses fluoride(in) = fluoride(out). Na(+) is not transported, but it plays an essential structural role and its presence is essential for fluoride channel function. Functionally, fluoride-specific ion channel. Important for reducing fluoride concentration in the cell, thus reducing its toxicity. The chain is Fluoride-specific ion channel FluC from Xylella fastidiosa (strain 9a5c).